A 289-amino-acid chain; its full sequence is 3-methyl-2-oxobutanoate hydroxymethyltransferase (289 aa).

2 residues coordinate Mg(2+): Asp58 and Asp99. Residues 58 to 59 (DS), Asp99, and Lys128 contribute to the 3-methyl-2-oxobutanoate site. Mg(2+) is bound at residue Glu130. Catalysis depends on Glu197, which acts as the Proton acceptor.

The protein belongs to the PanB family. As to quaternary structure, homodecamer; pentamer of dimers. Requires Mg(2+) as cofactor.

The protein resides in the cytoplasm. The enzyme catalyses 3-methyl-2-oxobutanoate + (6R)-5,10-methylene-5,6,7,8-tetrahydrofolate + H2O = 2-dehydropantoate + (6S)-5,6,7,8-tetrahydrofolate. The protein operates within cofactor biosynthesis; (R)-pantothenate biosynthesis; (R)-pantoate from 3-methyl-2-oxobutanoate: step 1/2. Its function is as follows. Catalyzes the reversible reaction in which hydroxymethyl group from 5,10-methylenetetrahydrofolate is transferred onto alpha-ketoisovalerate to form ketopantoate. The chain is 3-methyl-2-oxobutanoate hydroxymethyltransferase from Leptothrix cholodnii (strain ATCC 51168 / LMG 8142 / SP-6) (Leptothrix discophora (strain SP-6)).